Reading from the N-terminus, the 360-residue chain is Phospho-N-acetylmuramoyl-pentapeptide-transferase (360 aa).

10 consecutive transmembrane segments (helical) span residues 25–45, 73–93, 97–117, 128–148, 168–188, 199–219, 236–256, 262–282, 288–308, and 338–358; these read RAIL…PTLI, TMGG…WADL, YVWV…VDDY, LIAK…AVYL, VMPQ…VGTS, GLAI…AYVS, TAEL…FLWF, LVFM…IIAI, LVLF…MLQV, and VIVR…ATLK.

Belongs to the glycosyltransferase 4 family. MraY subfamily. It depends on Mg(2+) as a cofactor.

The protein resides in the cell inner membrane. It catalyses the reaction UDP-N-acetyl-alpha-D-muramoyl-L-alanyl-gamma-D-glutamyl-meso-2,6-diaminopimeloyl-D-alanyl-D-alanine + di-trans,octa-cis-undecaprenyl phosphate = di-trans,octa-cis-undecaprenyl diphospho-N-acetyl-alpha-D-muramoyl-L-alanyl-D-glutamyl-meso-2,6-diaminopimeloyl-D-alanyl-D-alanine + UMP. Its pathway is cell wall biogenesis; peptidoglycan biosynthesis. Its function is as follows. Catalyzes the initial step of the lipid cycle reactions in the biosynthesis of the cell wall peptidoglycan: transfers peptidoglycan precursor phospho-MurNAc-pentapeptide from UDP-MurNAc-pentapeptide onto the lipid carrier undecaprenyl phosphate, yielding undecaprenyl-pyrophosphoryl-MurNAc-pentapeptide, known as lipid I. This Idiomarina loihiensis (strain ATCC BAA-735 / DSM 15497 / L2-TR) protein is Phospho-N-acetylmuramoyl-pentapeptide-transferase.